The following is a 113-amino-acid chain: Putative anti-sigma factor antagonist TM1081 homolog (113 aa).

An STAS domain is found at 1-110; it reads MFPYKIVEDV…DTISEALEEV (110 aa). S55 carries the phosphoserine modification.

This sequence belongs to the anti-sigma-factor antagonist family. Phosphorylated on a serine residue.

Functionally, in the phosphorylated form it could act as an anti-anti-sigma factor that counteracts an anti-sigma factor and thus releases a sigma factor from inhibition. In Thermotoga neapolitana, this protein is Putative anti-sigma factor antagonist TM1081 homolog.